The chain runs to 227 residues: 2,3-bisphosphoglycerate-dependent phosphoglycerate mutase (227 aa).

Residues 7–14 (RHGFSEWN), 20–21 (TG), Arg59, 86–89 (ERHY), Lys97, 113–114 (RR), and 182–183 (GN) each bind substrate. His8 acts as the Tele-phosphohistidine intermediate in catalysis. Glu86 serves as the catalytic Proton donor/acceptor.

The protein belongs to the phosphoglycerate mutase family. BPG-dependent PGAM subfamily. In terms of assembly, homodimer.

The enzyme catalyses (2R)-2-phosphoglycerate = (2R)-3-phosphoglycerate. It participates in carbohydrate degradation; glycolysis; pyruvate from D-glyceraldehyde 3-phosphate: step 3/5. Catalyzes the interconversion of 2-phosphoglycerate and 3-phosphoglycerate. This Haemophilus influenzae (strain ATCC 51907 / DSM 11121 / KW20 / Rd) protein is 2,3-bisphosphoglycerate-dependent phosphoglycerate mutase.